The following is a 595-amino-acid chain: Prolycopene isomerase, chloroplastic (595 aa).

A chloroplast-targeting transit peptide spans 1–56; that stretch reads MDLCFQNPVKCGDRLFSALNTSTYYKLGTSNLGFNGPVLENRKKKKKLPRMVTVKS. Val-57 is subject to N-acetylvaline.

It belongs to the carotenoid/retinoid oxidoreductase family. CrtISO subfamily. NAD(+) is required as a cofactor. It depends on NADP(+) as a cofactor. The cofactor is FAD.

It is found in the plastid. The protein resides in the chloroplast membrane. It catalyses the reaction 7,7',9,9'-tetra-cis-lycopene = all-trans-lycopene. The protein operates within carotenoid biosynthesis; lycopene biosynthesis. Its function is as follows. Carotene cis-trans-isomerase that converts 7,9,9'-tri-cis-neurosporene to 9'-cis-neurosporene and 7,9,9',7'-tetra-cis-lycopene (also known as prolycopene) into all-trans-lycopene. Isomerization requires redox-active components, suggesting that isomerization is achieved by a reversible redox reaction acting at specific double bonds. Isomerizes adjacent cis-double bonds at C7 and C9 pairwise into the trans-configuration, but is incapable of isomerizing single cis-double bonds at C9 and C9'. Carotenoid biosynthesis is partly required to form the prolamellar bodies of etioplasts. The polypeptide is Prolycopene isomerase, chloroplastic (CRTISO) (Arabidopsis thaliana (Mouse-ear cress)).